We begin with the raw amino-acid sequence, 187 residues long: Ribosome-recycling factor (187 aa).

It belongs to the RRF family.

The protein localises to the cytoplasm. Responsible for the release of ribosomes from messenger RNA at the termination of protein biosynthesis. May increase the efficiency of translation by recycling ribosomes from one round of translation to another. This chain is Ribosome-recycling factor, found in Bradyrhizobium sp. (strain ORS 278).